We begin with the raw amino-acid sequence, 508 residues long: Probable ligand-gated ion channel 46 (508 aa).

The signal sequence occupies residues 1–18 (MQYLQFLSLVVLLLMCHA). The Extracellular portion of the chain corresponds to 19 to 274 (RKSVYRRNSP…FEFKRRAGWY (256 aa)). N-linked (GlcNAc...) asparagine glycans are attached at residues Asn-65, Asn-134, Asn-175, and Asn-201. An intrachain disulfide couples Cys-190 to Cys-204. The helical transmembrane segment at 275 to 295 (ILQAYLPTYLTICISWISFAL) threads the bilayer. Residues 296–301 (GSKAIP) are Cytoplasmic-facing. A helical transmembrane segment spans residues 302–321 (ARTMLGVNSLLAMTFQFGNI). Topologically, residues 322–335 (IRNLPRVSYVKAID) are extracellular. The helical transmembrane segment at 336–356 (VWMLSCMTFVFCSLLELAWVG) threads the bilayer. Residues 357-480 (YLSREEEPTS…KQRREILAHK (124 aa)) are Cytoplasmic-facing. A disordered region spans residues 374-407 (AQVAPKPCHPPPVQQNANNSSVHRRQKQPKNEEE). The chain crosses the membrane as a helical span at residues 481-501 (IDSVSVFMFPFLFVLFNIAYW). Topologically, residues 502 to 508 (QHYLRGY) are extracellular.

This sequence belongs to the ligand-gated ion channel (TC 1.A.9) family. In terms of tissue distribution, expressed in the nervous system, with high expression in cholinergic motor neurons and weak expression in GABAergic motor neurons.

Its subcellular location is the presynaptic cell membrane. It localises to the cell projection. The protein localises to the axon. It is found in the cytoplasmic vesicle. The protein resides in the secretory vesicle. Its subcellular location is the synaptic vesicle. In terms of biological role, probable component of a ligand-gated anion channel. Negatively regulates synaptic transmission and synaptic vesicle release in response to acetylcholine in cholinergic motor neurons. Role in synaptic vesicle release kinetics may be in association with the ligand-gated ion channel protein acc-4. This Caenorhabditis elegans protein is Probable ligand-gated ion channel 46.